A 251-amino-acid chain; its full sequence is Seminal metalloprotease 1 (251 aa).

The signal sequence occupies residues Met1–Ser18. The Peptidase M12A domain occupies Asn44–Pro248. N-linked (GlcNAc...) asparagine glycans are attached at residues Asn55 and Asn120. 2 cysteine pairs are disulfide-bonded: Cys87-Cys247 and Cys111-Cys136. Residue His144 coordinates Zn(2+). The active site involves Glu145. His148 and His154 together coordinate Zn(2+). A glycan (N-linked (GlcNAc...) asparagine) is linked at Asn185.

The cofactor is Zn(2+). Post-translationally, undergoes cleavage in the male during mating with a cleaved product detected in the ejaculatory duct and/or bulb of males by 8-10 minutes after the start of mating. Further cleavage occurs in the mated female. May undergo cleavage in a two-step process where it is first cleaved by Sems, making it susceptible to activational cleavage which may be carried out by another protease or by autocleavage. Produced in the male accessory glands and secreted into seminal fluid. In mated females, confined to the reproductive tract and also detected in eggs laid by mated females (at protein level).

The protein localises to the secreted. In terms of biological role, seminal fluid metalloprotease which is transferred to females during mating and is required for processing of two other seminal fluid proteins Acp26Aa and Acp36DE in mated females. The sequence is that of Seminal metalloprotease 1 from Drosophila melanogaster (Fruit fly).